Reading from the N-terminus, the 445-residue chain is GTPase Der (445 aa).

EngA-type G domains lie at 3-167 (PVIA…YADQ) and 180-353 (IKIA…AAAM). GTP-binding positions include 9-16 (GRPNVGKS), 56-60 (DTGGF), 119-122 (NKAE), 186-193 (GRPNVGKS), 233-237 (DTAGL), and 298-301 (NKWD). One can recognise a KH-like domain in the interval 354–438 (AKLPTPKLTR…PLRIEFRSST (85 aa)).

This sequence belongs to the TRAFAC class TrmE-Era-EngA-EngB-Septin-like GTPase superfamily. EngA (Der) GTPase family. Associates with the 50S ribosomal subunit.

In terms of biological role, GTPase that plays an essential role in the late steps of ribosome biogenesis. The polypeptide is GTPase Der (Burkholderia multivorans (strain ATCC 17616 / 249)).